Here is a 327-residue protein sequence, read N- to C-terminus: Ferrochelatase 2 (327 aa).

Fe cation is bound by residues His201 and Glu282.

Belongs to the ferrochelatase family.

It localises to the cytoplasm. The enzyme catalyses heme b + 2 H(+) = protoporphyrin IX + Fe(2+). It functions in the pathway porphyrin-containing compound metabolism; protoheme biosynthesis; protoheme from protoporphyrin-IX: step 1/1. Its function is as follows. Catalyzes the ferrous insertion into protoporphyrin IX. This Shewanella oneidensis (strain ATCC 700550 / JCM 31522 / CIP 106686 / LMG 19005 / NCIMB 14063 / MR-1) protein is Ferrochelatase 2.